A 104-amino-acid polypeptide reads, in one-letter code: Cell division protein FtsL (104 aa).

Topologically, residues 1–19 (MSTPNTHLLCLIATDLRKH) are cytoplasmic. Residues 20-39 (FFAVLVGMLIVCSAIYNVYT) form a helical membrane-spanning segment. Over 40–104 (THKTRGLVTQ…KKNSVLVELR (65 aa)) the chain is Periplasmic.

It belongs to the FtsL family. As to quaternary structure, part of a complex composed of FtsB, FtsL and FtsQ.

Its subcellular location is the cell inner membrane. Functionally, essential cell division protein. May link together the upstream cell division proteins, which are predominantly cytoplasmic, with the downstream cell division proteins, which are predominantly periplasmic. The sequence is that of Cell division protein FtsL from Psychromonas ingrahamii (strain DSM 17664 / CCUG 51855 / 37).